We begin with the raw amino-acid sequence, 255 residues long: Large ribosomal subunit protein uL4 (255 aa).

It belongs to the universal ribosomal protein uL4 family. In terms of assembly, part of the 50S ribosomal subunit.

Its function is as follows. One of the primary rRNA binding proteins, this protein initially binds near the 5'-end of the 23S rRNA. It is important during the early stages of 50S assembly. It makes multiple contacts with different domains of the 23S rRNA in the assembled 50S subunit and ribosome. Forms part of the polypeptide exit tunnel. The protein is Large ribosomal subunit protein uL4 of Thermoplasma acidophilum (strain ATCC 25905 / DSM 1728 / JCM 9062 / NBRC 15155 / AMRC-C165).